The following is a 444-amino-acid chain: Methylenetetrahydrofolate--tRNA-(uracil-5-)-methyltransferase TrmFO (444 aa).

G10 to G15 contributes to the FAD binding site.

It belongs to the MnmG family. TrmFO subfamily. Requires FAD as cofactor.

Its subcellular location is the cytoplasm. The catalysed reaction is uridine(54) in tRNA + (6R)-5,10-methylene-5,6,7,8-tetrahydrofolate + NADH + H(+) = 5-methyluridine(54) in tRNA + (6S)-5,6,7,8-tetrahydrofolate + NAD(+). It catalyses the reaction uridine(54) in tRNA + (6R)-5,10-methylene-5,6,7,8-tetrahydrofolate + NADPH + H(+) = 5-methyluridine(54) in tRNA + (6S)-5,6,7,8-tetrahydrofolate + NADP(+). In terms of biological role, catalyzes the folate-dependent formation of 5-methyl-uridine at position 54 (M-5-U54) in all tRNAs. The polypeptide is Methylenetetrahydrofolate--tRNA-(uracil-5-)-methyltransferase TrmFO (Streptococcus mutans serotype c (strain ATCC 700610 / UA159)).